The following is a 100-amino-acid chain: uncharacterized protein (100 aa).

Lys-98 is covalently cross-linked (Isoglutamyl lysine isopeptide (Lys-Gln) (interchain with Q-Cter in protein Pup)).

This is an uncharacterized protein from Mycobacterium tuberculosis (strain CDC 1551 / Oshkosh).